Reading from the N-terminus, the 192-residue chain is Small ribosomal subunit protein uS4c-2 (192 aa).

Residues threonine 91–tyrosine 155 form the S4 RNA-binding domain.

The protein belongs to the universal ribosomal protein uS4 family. As to quaternary structure, part of the 30S ribosomal subunit. Contacts protein S5. The interaction surface between S4 and S5 is involved in control of translational fidelity.

The protein resides in the plastid. It localises to the chloroplast. One of the primary rRNA binding proteins, it binds directly to 16S rRNA where it nucleates assembly of the body of the 30S subunit. Functionally, with S5 and S12 plays an important role in translational accuracy. This chain is Small ribosomal subunit protein uS4c-2, found in Cyanidium caldarium (Red alga).